Consider the following 570-residue polypeptide: MSYILSRKSYADMFGVTTGDKITLGDTNLLVRVEKDLTVYGEECKFGGGKVLRDGMGQASGYKSDDVLDLLITNALIIDYTGIYKADIGIKNGHIKAIGKSGNPHIMPGVHPDMIAGTVTEVIAGEGMIITAGGIDNHIHYICPQQMNEALASGITTFIGGGTGPATGTKATTCTPGAFHIEMMLKATDNIPMNIGFLGKGNTSHPEEIEEQIKAGALGLKLHEDWGTTPAAIDNCLSVAEKYDVQVCIHTDTLNESGFVESSRAAFKGRTIHTYHTEGAGGGHAPDIIVLCGDPDVLPSSTNPTKPFTVNTIDEHLDMLMVCHHLDRNIPEDVSFAESRIRGETIAAEDILHDMGALSMLSSDSQAMGRVGEVICRTWQTAHKMKEQRGLLEEDKQIDADNFRVKRYIAKYTINPAIAHGCSHVIGSVEVGKLADLVVWQPDFFGSRPELILKGGVIVQAQMGDPNASIPTPQPFFSRPMFGAMGKATGATSLAFVSAASEETVNGYGLNKKVTPVVGCRSVKKKDMKLNDFLPDIKVDAETYKVTVNGEWITCAPAKKLPLAQLYNLF.

The region spanning 133-570 (GGIDNHIHYI…LPLAQLYNLF (438 aa)) is the Urease domain. 3 residues coordinate Ni(2+): histidine 138, histidine 140, and lysine 221. Lysine 221 is subject to N6-carboxylysine. Histidine 223 contributes to the substrate binding site. Residues histidine 250 and histidine 276 each coordinate Ni(2+). Histidine 324 functions as the Proton donor in the catalytic mechanism. Position 364 (aspartate 364) interacts with Ni(2+).

The protein belongs to the metallo-dependent hydrolases superfamily. Urease alpha subunit family. As to quaternary structure, heterotrimer of UreA (gamma), UreB (beta) and UreC (alpha) subunits. Three heterotrimers associate to form the active enzyme. The cofactor is Ni cation. Carboxylation allows a single lysine to coordinate two nickel ions.

It is found in the cytoplasm. The enzyme catalyses urea + 2 H2O + H(+) = hydrogencarbonate + 2 NH4(+). It functions in the pathway nitrogen metabolism; urea degradation; CO(2) and NH(3) from urea (urease route): step 1/1. This is Urease subunit alpha from Cytophaga hutchinsonii (strain ATCC 33406 / DSM 1761 / CIP 103989 / NBRC 15051 / NCIMB 9469 / D465).